A 457-amino-acid chain; its full sequence is Siroheme synthase (457 aa).

The precorrin-2 dehydrogenase /sirohydrochlorin ferrochelatase stretch occupies residues 1-204; the sequence is MDHLPIFCQL…ADEKAVNATT (204 aa). NAD(+) is bound by residues 22-23 and 43-44; these read DV and LN. Ser128 is subject to Phosphoserine. The uroporphyrinogen-III C-methyltransferase stretch occupies residues 216 to 457; it reads GEVVLVGAGP…RDKLNWFSNH (242 aa). Pro225 contributes to the S-adenosyl-L-methionine binding site. The active-site Proton acceptor is the Asp248. Lys270 serves as the catalytic Proton donor. Residues 301–303, Ile306, 331–332, Met382, and Gly411 contribute to the S-adenosyl-L-methionine site; these read GGD and TA.

This sequence in the N-terminal section; belongs to the precorrin-2 dehydrogenase / sirohydrochlorin ferrochelatase family. It in the C-terminal section; belongs to the precorrin methyltransferase family.

It carries out the reaction uroporphyrinogen III + 2 S-adenosyl-L-methionine = precorrin-2 + 2 S-adenosyl-L-homocysteine + H(+). It catalyses the reaction precorrin-2 + NAD(+) = sirohydrochlorin + NADH + 2 H(+). The enzyme catalyses siroheme + 2 H(+) = sirohydrochlorin + Fe(2+). The protein operates within cofactor biosynthesis; adenosylcobalamin biosynthesis; precorrin-2 from uroporphyrinogen III: step 1/1. Its pathway is cofactor biosynthesis; adenosylcobalamin biosynthesis; sirohydrochlorin from precorrin-2: step 1/1. It functions in the pathway porphyrin-containing compound metabolism; siroheme biosynthesis; precorrin-2 from uroporphyrinogen III: step 1/1. It participates in porphyrin-containing compound metabolism; siroheme biosynthesis; siroheme from sirohydrochlorin: step 1/1. The protein operates within porphyrin-containing compound metabolism; siroheme biosynthesis; sirohydrochlorin from precorrin-2: step 1/1. In terms of biological role, multifunctional enzyme that catalyzes the SAM-dependent methylations of uroporphyrinogen III at position C-2 and C-7 to form precorrin-2 via precorrin-1. Then it catalyzes the NAD-dependent ring dehydrogenation of precorrin-2 to yield sirohydrochlorin. Finally, it catalyzes the ferrochelation of sirohydrochlorin to yield siroheme. This chain is Siroheme synthase, found in Salmonella paratyphi A (strain ATCC 9150 / SARB42).